The primary structure comprises 22 residues: Mu-conotoxin GIIIB (22 aa).

Disulfide bonds link Cys-3/Cys-15, Cys-4/Cys-20, and Cys-10/Cys-21. Residues Pro-6 and Pro-7 each carry the 4-hydroxyproline; partial modification. Pro-17 is modified (4-hydroxyproline). Position 22 is an alanine amide (Ala-22).

This sequence belongs to the conotoxin M superfamily. In terms of tissue distribution, expressed by the venom duct.

It is found in the secreted. Functionally, mu-conotoxins block voltage-gated sodium channels (Nav). The sequence is that of Mu-conotoxin GIIIB from Conus geographus (Geography cone).